A 277-amino-acid polypeptide reads, in one-letter code: Probable endonuclease LCL3 (277 aa).

Residues 39 to 56 (WIAPIIAAGATMGFWSFY) traverse the membrane as a helical segment. The TNase-like domain occupies 77 to 239 (RSLFGKVTSV…RQKGKGMWSL (163 aa)). Residue Arg-126 is part of the active site. Asp-131 serves as a coordination point for Ca(2+). Catalysis depends on residues Glu-134 and Arg-174.

It belongs to the LCL3 family.

The protein resides in the mitochondrion. Its subcellular location is the membrane. This chain is Probable endonuclease LCL3 (LCL3), found in Podospora anserina (strain S / ATCC MYA-4624 / DSM 980 / FGSC 10383) (Pleurage anserina).